The primary structure comprises 93 residues: Phosphoribosyl-ATP pyrophosphatase (93 aa).

The protein belongs to the PRA-PH family.

The protein resides in the cytoplasm. The enzyme catalyses 1-(5-phospho-beta-D-ribosyl)-ATP + H2O = 1-(5-phospho-beta-D-ribosyl)-5'-AMP + diphosphate + H(+). It participates in amino-acid biosynthesis; L-histidine biosynthesis; L-histidine from 5-phospho-alpha-D-ribose 1-diphosphate: step 2/9. This is Phosphoribosyl-ATP pyrophosphatase from Rhodococcus jostii (strain RHA1).